A 343-amino-acid polypeptide reads, in one-letter code: MSDRQAALDMALKQIEKQFGKGSIMKLGEQAERRVSTVSSGSLALDVALGVGGYPRGRIIEIYGPESSGKTTVSLHAIAEVQRQGGQAAFIDAEHAMDPVYAQKLGVNIDELLLSQPDTGEQGLEIAEALVRSGAVDIIVIDSVAALVPKAEIEGDMGDSHVGLQARLMSQALRKLSGAINKSKTIAIFINQIREKVGVMFGNPETTPGGRALKFYSTVRLEVRRAEQLKQGNDIVGNKTKVKVVKNKVAPPFRVAEVDIMYGEGISREGEILDMASELDIVQKSGAWYSYNEERLGQGRENSKQFLKENTDLREEIAFFIREHHGISEDSGAEGAEDSTLLD.

An ATP-binding site is contributed by 64–71 (GPESSGKT).

It belongs to the RecA family.

The protein localises to the cytoplasm. Can catalyze the hydrolysis of ATP in the presence of single-stranded DNA, the ATP-dependent uptake of single-stranded DNA by duplex DNA, and the ATP-dependent hybridization of homologous single-stranded DNAs. It interacts with LexA causing its activation and leading to its autocatalytic cleavage. This chain is Protein RecA, found in Bacillus cereus (strain ATCC 14579 / DSM 31 / CCUG 7414 / JCM 2152 / NBRC 15305 / NCIMB 9373 / NCTC 2599 / NRRL B-3711).